The following is a 265-amino-acid chain: Keratinocyte-associated transmembrane protein 2 (265 aa).

Residues 1–49 form the signal peptide; the sequence is MAAAALKRMRGPAQAKLLPGSAIQALVGLARPLVLALLLVSAALSSVVS. At 50-196 the chain is on the extracellular side; that stretch reads RTDSPSPTVL…MPSSNIEEED (147 aa). Residues 72-96 are compositionally biased toward polar residues; sequence THENQTKPSISQISTTLPPTMSTEK. 2 disordered regions span residues 72–123 and 135–168; these read THEN…EDPS and SPST…SDDT. Asn-75 is a glycosylation site (N-linked (GlcNAc...) asparagine). Residues 114–123 are compositionally biased toward acidic residues; sequence EEADNNEDPS. A helical transmembrane segment spans residues 197–217; that stretch reads SHFFFHLIIFAFCIAVVYITY. The Cytoplasmic segment spans residues 218 to 265; sequence HNKRKIFLLVQSRKWRDGLCSKTVEYHRLDQNVNEAMPSLKITNDYTF. Residues Ser-229 and Ser-256 each carry the phosphoserine modification.

The protein resides in the membrane. The chain is Keratinocyte-associated transmembrane protein 2 (KCT2) from Pongo abelii (Sumatran orangutan).